Consider the following 413-residue polypeptide: Multifunctional CCA protein (413 aa).

Residues G8 and R11 each coordinate ATP. The CTP site is built by G8 and R11. Positions 21 and 23 each coordinate Mg(2+). R91, R137, and R140 together coordinate ATP. The CTP site is built by R91, R137, and R140. Residues 228-329 (TGIHTLMVLE…VKIFDKADLW (102 aa)) enclose the HD domain.

It belongs to the tRNA nucleotidyltransferase/poly(A) polymerase family. Bacterial CCA-adding enzyme type 1 subfamily. As to quaternary structure, monomer. Can also form homodimers and oligomers. Mg(2+) serves as cofactor. Ni(2+) is required as a cofactor.

It catalyses the reaction a tRNA precursor + 2 CTP + ATP = a tRNA with a 3' CCA end + 3 diphosphate. It carries out the reaction a tRNA with a 3' CCA end + 2 CTP + ATP = a tRNA with a 3' CCACCA end + 3 diphosphate. In terms of biological role, catalyzes the addition and repair of the essential 3'-terminal CCA sequence in tRNAs without using a nucleic acid template. Adds these three nucleotides in the order of C, C, and A to the tRNA nucleotide-73, using CTP and ATP as substrates and producing inorganic pyrophosphate. tRNA 3'-terminal CCA addition is required both for tRNA processing and repair. Also involved in tRNA surveillance by mediating tandem CCA addition to generate a CCACCA at the 3' terminus of unstable tRNAs. While stable tRNAs receive only 3'-terminal CCA, unstable tRNAs are marked with CCACCA and rapidly degraded. In Shewanella sediminis (strain HAW-EB3), this protein is Multifunctional CCA protein.